We begin with the raw amino-acid sequence, 139 residues long: ATP synthase epsilon chain (139 aa).

The protein belongs to the ATPase epsilon chain family. As to quaternary structure, F-type ATPases have 2 components, CF(1) - the catalytic core - and CF(0) - the membrane proton channel. CF(1) has five subunits: alpha(3), beta(3), gamma(1), delta(1), epsilon(1). CF(0) has three main subunits: a, b and c.

It localises to the cell inner membrane. Produces ATP from ADP in the presence of a proton gradient across the membrane. The chain is ATP synthase epsilon chain from Serratia proteamaculans (strain 568).